Here is a 72-residue protein sequence, read N- to C-terminus: High-potential iron-sulfur protein isozyme 1 (72 aa).

[4Fe-4S] cluster-binding residues include cysteine 34, cysteine 37, cysteine 51, and cysteine 65.

The protein belongs to the high-potential iron-sulfur protein (HiPIP) family. As to quaternary structure, homodimer.

In terms of biological role, specific class of high-redox-potential 4Fe-4S ferredoxins. Functions in anaerobic electron transport in most purple and in some other photosynthetic bacteria and in at least one genus (Paracoccus) of halophilic, denitrifying bacteria. The sequence is that of High-potential iron-sulfur protein isozyme 1 (hip1) from Ectothiorhodospira shaposhnikovii (Ectothiorhodospira vacuolata).